We begin with the raw amino-acid sequence, 1011 residues long: RAS protein activator like-3 (1011 aa).

Residues 1 to 38 (MDPPSPSRTSQTQPTATSPLTSYRWHTGGGGEKAAGGF) form a disordered region. The segment covering 7 to 22 (SRTSQTQPTATSPLTS) has biased composition (low complexity). Phosphoserine occurs at positions 18 and 51. Disordered stretches follow at residues 52 to 136 (HQEP…PVWD), 151 to 197 (GGEE…GPNQ), and 209 to 230 (KEKK…GSRE). A compositionally biased stretch (basic residues) spans 81–95 (SRLRLSKALWGRHKN). Over residues 100–117 (PDPEPEQEAPELEPEPEL) the composition is skewed to acidic residues. The span at 118 to 131 (EPPTPQIPEAPTPN) shows a compositional bias: pro residues. 4 positions are modified to phosphoserine: Ser-164, Ser-166, Ser-167, and Ser-170. Over residues 179–190 (RDPDRMPGKTEP) the composition is skewed to basic and acidic residues. The PH domain occupies 197-293 (QVHNVRGLLK…WIEDLRRQFQ (97 aa)). Phosphoserine is present on residues Ser-224, Ser-228, and Ser-231. Thr-234 is modified (phosphothreonine). Residues 284-404 (WIEDLRRQFQ…APAAGLERWF (121 aa)) enclose the C2 domain. Residues 474–682 (GRAQALVTDL…PAMQCFLDQV (209 aa)) form the Ras-GAP domain. 2 disordered regions span residues 756–885 (QVHS…LGTH) and 987–1011 (LSPR…GDTT). Residues Ser-787 and Ser-790 each carry the phosphoserine modification. Over residues 792–808 (RRSESWARPRPDEERPL) the composition is skewed to basic and acidic residues. 2 stretches are compositionally biased toward polar residues: residues 871-882 (QMDQPQDRNQAL) and 987-999 (LSPR…SQPQ). The stretch at 888–988 (VNKLAELQCE…RDAVQSLQLS (101 aa)) forms a coiled coil. Residue Ser-988 is modified to Phosphoserine.

Predominantly expressed in cells of hematopoietic lineages.

It is found in the cytoplasm. The protein resides in the cell cortex. In terms of biological role, functions as a Ras GTPase-activating protein. Plays an important role in the expansion and functions of natural killer T (NKT) cells in the liver by negatively regulating RAS activity and the down-stream ERK signaling pathway. The protein is RAS protein activator like-3 (RASAL3) of Homo sapiens (Human).